A 274-amino-acid polypeptide reads, in one-letter code: 4-diphosphocytidyl-2-C-methyl-D-erythritol kinase (274 aa).

The active site involves Lys-8. An ATP-binding site is contributed by 94 to 104; it reads PSGAGLGGGSS. Residue Asp-136 is part of the active site.

The protein belongs to the GHMP kinase family. IspE subfamily.

The catalysed reaction is 4-CDP-2-C-methyl-D-erythritol + ATP = 4-CDP-2-C-methyl-D-erythritol 2-phosphate + ADP + H(+). It participates in isoprenoid biosynthesis; isopentenyl diphosphate biosynthesis via DXP pathway; isopentenyl diphosphate from 1-deoxy-D-xylulose 5-phosphate: step 3/6. Catalyzes the phosphorylation of the position 2 hydroxy group of 4-diphosphocytidyl-2C-methyl-D-erythritol. In Bacteroides thetaiotaomicron (strain ATCC 29148 / DSM 2079 / JCM 5827 / CCUG 10774 / NCTC 10582 / VPI-5482 / E50), this protein is 4-diphosphocytidyl-2-C-methyl-D-erythritol kinase.